The primary structure comprises 262 residues: MGFLSGKRILVTGVASKLSIAYGIAQAMHREGAELAFTYQNDKLKGRVEEFAAQLGSSIVLPCDVAEDASIDAMFAELGNVWPKFDGFVHSIGFAPGDQLDGDYVNAVTREGFKVAHDISSYSFVAMAKACRTMLNPGSALLTLSYLGAERAIPNYNVMGLAKASLEANVRYMANAMGPEGVRVNAISAGPIRTLAASGIKDFRKMLAHCEAVTPIRRTVTIEDVGNSAAFLCSDLSAGISGEVVHVDGGFSIAAMNELELK.

NAD(+) is bound by residues Gly13, 19-20 (SI), Gln40, 64-65 (DV), and Ile92. Substrate is bound at residue Ala95. Catalysis depends on proton acceptor residues Tyr146 and Tyr156. Residues Lys163 and 192-196 (IRTLA) contribute to the NAD(+) site.

The protein belongs to the short-chain dehydrogenases/reductases (SDR) family. FabI subfamily. In terms of assembly, homotetramer.

It carries out the reaction a 2,3-saturated acyl-[ACP] + NAD(+) = a (2E)-enoyl-[ACP] + NADH + H(+). Its pathway is lipid metabolism; fatty acid biosynthesis. It functions in the pathway cofactor biosynthesis; biotin biosynthesis. Its function is as follows. Catalyzes the reduction of a carbon-carbon double bond in an enoyl moiety that is covalently linked to an acyl carrier protein (ACP). Involved in the elongation cycle of fatty acid which are used in the lipid metabolism and in the biotin biosynthesis. The protein is Enoyl-[acyl-carrier-protein] reductase [NADH] FabI (fabI) of Salmonella typhimurium (strain LT2 / SGSC1412 / ATCC 700720).